We begin with the raw amino-acid sequence, 84 residues long: Large ribosomal subunit protein bL27 (84 aa).

The disordered stretch occupies residues 1-22 (MAHKKAGGSTRNGRDSESKRLG).

Belongs to the bacterial ribosomal protein bL27 family.

The sequence is that of Large ribosomal subunit protein bL27 from Shewanella woodyi (strain ATCC 51908 / MS32).